Reading from the N-terminus, the 1630-residue chain is Separin (1630 aa).

The disordered stretch occupies residues 1016–1037 (SKHSTGLKLCDSPRSSSMTPRG). In terms of domain architecture, Peptidase C50 spans 1443–1542 (EDNISMILNP…SAAMKYYGKL (100 aa)). C1531 is an active-site residue.

May bind calcium. Interacts with PDS1. Interacts with MCD1.

It is found in the nucleus. Its subcellular location is the cytoplasm. The protein resides in the cytoskeleton. The protein localises to the microtubule organizing center. It localises to the spindle pole body. It catalyses the reaction All bonds known to be hydrolyzed by this endopeptidase have arginine in P1 and an acidic residue in P4. P6 is often occupied by an acidic residue or by a hydroxy-amino-acid residue, the phosphorylation of which enhances cleavage.. Its activity is regulated as follows. It is inactivated via its interaction with PDS1, which probably covers its active site. PDS1 degradation at anaphase, liberates it and triggers MCD1 cleavage. Its function is as follows. Caspase-like protease, which plays a central role in the chromosome segregation by cleaving the MCD1/SCC1 subunit of the cohesin complex at the onset of anaphase. During most of the cell cycle, it is inactivated by securin/PDS1 protein. It also promotes anaphase spindle elongation. A component of the FEAR (CDC14 early anaphase release) network which promotes CDC14 release from the nucleolus during early anaphase. Cleaves SLK19. The chain is Separin (ESP1) from Saccharomyces cerevisiae (strain ATCC 204508 / S288c) (Baker's yeast).